The chain runs to 508 residues: Light-independent protochlorophyllide reductase subunit B (508 aa).

A [4Fe-4S] cluster-binding site is contributed by D36. The active-site Proton donor is the D294. 429 to 430 (GM) provides a ligand contact to substrate.

It belongs to the ChlB/BchB/BchZ family. Protochlorophyllide reductase is composed of three subunits; ChlL, ChlN and ChlB. Forms a heterotetramer of two ChlB and two ChlN subunits. It depends on [4Fe-4S] cluster as a cofactor.

It carries out the reaction chlorophyllide a + oxidized 2[4Fe-4S]-[ferredoxin] + 2 ADP + 2 phosphate = protochlorophyllide a + reduced 2[4Fe-4S]-[ferredoxin] + 2 ATP + 2 H2O. Its pathway is porphyrin-containing compound metabolism; chlorophyll biosynthesis (light-independent). Its function is as follows. Component of the dark-operative protochlorophyllide reductase (DPOR) that uses Mg-ATP and reduced ferredoxin to reduce ring D of protochlorophyllide (Pchlide) to form chlorophyllide a (Chlide). This reaction is light-independent. The NB-protein (ChlN-ChlB) is the catalytic component of the complex. This Trichormus variabilis (strain ATCC 29413 / PCC 7937) (Anabaena variabilis) protein is Light-independent protochlorophyllide reductase subunit B.